The sequence spans 78 residues: MFKTINKSITSILLFMISFYQKWFSPFFGPRCRFIPSCSSYGYEAITRHGPWKGGWLTLRRLSRCHPLTPCGCDPVPD.

It belongs to the UPF0161 family.

The protein resides in the cell inner membrane. In terms of biological role, could be involved in insertion of integral membrane proteins into the membrane. In Prochlorococcus marinus (strain MIT 9312), this protein is Putative membrane protein insertion efficiency factor.